Reading from the N-terminus, the 155-residue chain is Ribosome maturation factor RimP (155 aa).

It belongs to the RimP family.

It localises to the cytoplasm. In terms of biological role, required for maturation of 30S ribosomal subunits. The sequence is that of Ribosome maturation factor RimP from Prochlorococcus marinus (strain MIT 9312).